Consider the following 178-residue polypeptide: RNA pyrophosphohydrolase (178 aa).

The region spanning 18–171 (PYRPCVGLMV…KRKVYEQVVA (154 aa)) is the Nudix hydrolase domain. A Nudix box motif is present at residues 59–80 (GGIDKGEDPAQAALRELYEETG).

This sequence belongs to the Nudix hydrolase family. RppH subfamily. The cofactor is a divalent metal cation.

In terms of biological role, accelerates the degradation of transcripts by removing pyrophosphate from the 5'-end of triphosphorylated RNA, leading to a more labile monophosphorylated state that can stimulate subsequent ribonuclease cleavage. The sequence is that of RNA pyrophosphohydrolase from Brucella melitensis biotype 2 (strain ATCC 23457).